Here is a 236-residue protein sequence, read N- to C-terminus: LexA repressor (236 aa).

Positions 26–46 (FDEMKDALDLRSKSGIHRLII) form a DNA-binding region, H-T-H motif. Residues Ser-157 and Lys-195 each act as for autocatalytic cleavage activity in the active site.

Belongs to the peptidase S24 family. As to quaternary structure, homodimer.

It catalyses the reaction Hydrolysis of Ala-|-Gly bond in repressor LexA.. Represses a number of genes involved in the response to DNA damage (SOS response), including recA and lexA. In the presence of single-stranded DNA, RecA interacts with LexA causing an autocatalytic cleavage which disrupts the DNA-binding part of LexA, leading to derepression of the SOS regulon and eventually DNA repair. This chain is LexA repressor, found in Methylocella silvestris (strain DSM 15510 / CIP 108128 / LMG 27833 / NCIMB 13906 / BL2).